The sequence spans 242 residues: Ribonuclease PH (242 aa).

Phosphate-binding positions include Arg-89 and 127–129; that span reads GTR.

The protein belongs to the RNase PH family. As to quaternary structure, homohexameric ring arranged as a trimer of dimers.

It carries out the reaction tRNA(n+1) + phosphate = tRNA(n) + a ribonucleoside 5'-diphosphate. Functionally, phosphorolytic 3'-5' exoribonuclease that plays an important role in tRNA 3'-end maturation. Removes nucleotide residues following the 3'-CCA terminus of tRNAs; can also add nucleotides to the ends of RNA molecules by using nucleoside diphosphates as substrates, but this may not be physiologically important. Probably plays a role in initiation of 16S rRNA degradation (leading to ribosome degradation) during starvation. This Neisseria gonorrhoeae (strain ATCC 700825 / FA 1090) protein is Ribonuclease PH.